Here is a 200-residue protein sequence, read N- to C-terminus: Probable nicotinate-nucleotide adenylyltransferase (200 aa).

The protein belongs to the NadD family.

It carries out the reaction nicotinate beta-D-ribonucleotide + ATP + H(+) = deamido-NAD(+) + diphosphate. It participates in cofactor biosynthesis; NAD(+) biosynthesis; deamido-NAD(+) from nicotinate D-ribonucleotide: step 1/1. Functionally, catalyzes the reversible adenylation of nicotinate mononucleotide (NaMN) to nicotinic acid adenine dinucleotide (NaAD). The protein is Probable nicotinate-nucleotide adenylyltransferase of Clostridium acetobutylicum (strain ATCC 824 / DSM 792 / JCM 1419 / IAM 19013 / LMG 5710 / NBRC 13948 / NRRL B-527 / VKM B-1787 / 2291 / W).